The primary structure comprises 217 residues: MKLIIVLVMMLVCVYSMSIEKNIPKNHEVPAKKQFAETKVEKKKRSDDGDEEICDDDDEDCEDVVDIEECNEDDDDCVDGGETEECDEDDDDCQEEKKKKKRETKPKLKKRNDDEEEEECEEDDEDCEVEVDIEECDEEDDDCYDEDKKKKKENKLKKESKKKNSKKTVPKNAKKSSKRSTSTKKTSQKKQQDKRGAIQKNLKIKEANFKKKFNLNF.

Residues 1-16 form the signal peptide; the sequence is MKLIIVLVMMLVCVYS. Basic and acidic residues predominate over residues 24–47; it reads PKNHEVPAKKQFAETKVEKKKRSD. Disordered stretches follow at residues 24–58 and 72–205; these read PKNHEVPAKKQFAETKVEKKKRSDDGDEEICDDDD and EDDD…LKIK. 2 consecutive repeat copies span residues 32–81 and 98–147. Residues 32-147 form a 2 X 50 AA approximate repeats region; it reads KKQFAETKVE…EEDDDCYDED (116 aa). Composition is skewed to acidic residues over residues 48 to 58 and 72 to 94; these read DGDEEICDDDD and EDDDDCVDGGETEECDEDDDDCQ. Basic residues predominate over residues 98–110; sequence KKKKRETKPKLKK. Residues 114 to 145 are compositionally biased toward acidic residues; it reads DEEEEECEEDDEDCEVEVDIEECDEEDDDCYD. The segment covering 149–188 has biased composition (basic residues); sequence KKKKENKLKKESKKKNSKKTVPKNAKKSSKRSTSTKKTSQ.

Expressed in tentacle-specific epithelial cells (battery cells) as well as in a small fraction of ectodermal epithelial cells in the gastric region subjacent to the tentacles (the tentacle formation region). The later cells are committed to become battery cells.

Functionally, responds to early signals of head formation in hydra. This is KS1 protein (KS1) from Hydra vulgaris (Hydra).